Consider the following 220-residue polypeptide: MNKVDYRLNALVDASLADVAPLPELALAAALNGATILQYRDKHGSTREMIENARAIREAIGGTGVPLVINDRVDVALASGADGVHLGADDMDAKTARRILGEKAIIGLTVKNRADAERAASMPADYACIGGVFETVSKVNPDKPVGIEGFTTLRALLKEWQPDMPVGAIAGIDLDRVPAVIAAGADGVAVISAIFRAANIASATSDFRSAIDAALKARQP.

Residues 38 to 42 (QYRDK) and asparagine 70 each bind 4-amino-2-methyl-5-(diphosphooxymethyl)pyrimidine. Positions 71 and 90 each coordinate Mg(2+). Threonine 109 contacts 4-amino-2-methyl-5-(diphosphooxymethyl)pyrimidine. 135–137 (TVS) provides a ligand contact to 2-[(2R,5Z)-2-carboxy-4-methylthiazol-5(2H)-ylidene]ethyl phosphate. Lysine 138 contacts 4-amino-2-methyl-5-(diphosphooxymethyl)pyrimidine. 2-[(2R,5Z)-2-carboxy-4-methylthiazol-5(2H)-ylidene]ethyl phosphate is bound by residues glycine 171 and 191–192 (IS).

The protein belongs to the thiamine-phosphate synthase family. The cofactor is Mg(2+).

The catalysed reaction is 2-[(2R,5Z)-2-carboxy-4-methylthiazol-5(2H)-ylidene]ethyl phosphate + 4-amino-2-methyl-5-(diphosphooxymethyl)pyrimidine + 2 H(+) = thiamine phosphate + CO2 + diphosphate. It carries out the reaction 2-(2-carboxy-4-methylthiazol-5-yl)ethyl phosphate + 4-amino-2-methyl-5-(diphosphooxymethyl)pyrimidine + 2 H(+) = thiamine phosphate + CO2 + diphosphate. The enzyme catalyses 4-methyl-5-(2-phosphooxyethyl)-thiazole + 4-amino-2-methyl-5-(diphosphooxymethyl)pyrimidine + H(+) = thiamine phosphate + diphosphate. Its pathway is cofactor biosynthesis; thiamine diphosphate biosynthesis; thiamine phosphate from 4-amino-2-methyl-5-diphosphomethylpyrimidine and 4-methyl-5-(2-phosphoethyl)-thiazole: step 1/1. Condenses 4-methyl-5-(beta-hydroxyethyl)thiazole monophosphate (THZ-P) and 2-methyl-4-amino-5-hydroxymethyl pyrimidine pyrophosphate (HMP-PP) to form thiamine monophosphate (TMP). This chain is Thiamine-phosphate synthase, found in Agrobacterium fabrum (strain C58 / ATCC 33970) (Agrobacterium tumefaciens (strain C58)).